We begin with the raw amino-acid sequence, 211 residues long: MTKGILGRKIGMTQVFAENGDLIPVTVIEATPNVVLQKKTIENDGYEAIQLGFEDLSTKRANKPQIGHAAKANTAPKRFIREIRGANVNEYEVGQEVKVDIFSEGDIVDVTGISKGKGFQGVIKRHGQSRGPMAHGSRYHRRPGSMGAIAPNRVFKTKNLPGRMGGERVTIQNLKIVKVDPERNLLLIKGNVPGPRKGLVIVKSAVKAKAK.

Residues 126 to 147 (HGQSRGPMAHGSRYHRRPGSMG) form a disordered region.

This sequence belongs to the universal ribosomal protein uL3 family. As to quaternary structure, part of the 50S ribosomal subunit. Forms a cluster with proteins L14 and L19.

One of the primary rRNA binding proteins, it binds directly near the 3'-end of the 23S rRNA, where it nucleates assembly of the 50S subunit. This chain is Large ribosomal subunit protein uL3, found in Geobacillus thermodenitrificans (strain NG80-2).